An 886-amino-acid chain; its full sequence is Leucine--tRNA ligase (886 aa).

Residues 51 to 61 (PYPSGRIHMGH) carry the 'HIGH' region motif. The 'KMSKS' region signature appears at 644–648 (KMSKS). Lys647 is a binding site for ATP.

Belongs to the class-I aminoacyl-tRNA synthetase family.

It localises to the cytoplasm. It catalyses the reaction tRNA(Leu) + L-leucine + ATP = L-leucyl-tRNA(Leu) + AMP + diphosphate. This chain is Leucine--tRNA ligase, found in Bartonella tribocorum (strain CIP 105476 / IBS 506).